The chain runs to 630 residues: Transcription factor MYC1 (630 aa).

Disordered regions lie at residues 356 to 398 (FGDS…NNEE) and 430 to 463 (VKEAVVEPEKKPRKRGRKPANGREEPLNHVEAER). Basic residues predominate over residues 440–449 (KPRKRGRKPA). Residues 450-463 (NGREEPLNHVEAER) are compositionally biased toward basic and acidic residues. Residues 453 to 466 (EEPLNHVEAERQRR) are basic motif; degenerate. In terms of domain architecture, bHLH spans 453-502 (EEPLNHVEAERQRREKLNQRFYALRAVVPNVSKMDKASLLGDAIAYINEL). Residues 467 to 502 (EKLNQRFYALRAVVPNVSKMDKASLLGDAIAYINEL) are helix-loop-helix motif.

In terms of tissue distribution, highly expressed in trichomes and at lower levels in leaves and flowers. Expressed at low levels in roots, stems, leaves, flowers and fruits.

The protein resides in the nucleus. Its function is as follows. Transcriptional activator that binds to the G-box motif (5'-AACGTG-3') found in a number of promoters of jasmonate-induced genes. Transcription activator involved in the transcriptional regulation of terpene biosynthesis in glandular trichomes. Binds to the promoter of the linalool synthase TPS5 and promotes TPS5 gene transactivation. Acts synergistically with EOT1 in the transactivation of TPS5. Involved in type VI glandular trichome development. Involved in the activation of terpene synthases required for volatile mono- and sesquiterpenes synthesis by the glandular cells of type VI trichomes. The chain is Transcription factor MYC1 from Solanum lycopersicum (Tomato).